Consider the following 387-residue polypeptide: Succinate--CoA ligase [ADP-forming] subunit beta (387 aa).

The ATP-grasp domain occupies 9–236; the sequence is KELFAKHNVP…RAATDPLELK (228 aa). ATP is bound by residues Lys-45, 52–54, Ser-94, and Glu-99; that span reads GRG. 2 residues coordinate Mg(2+): Asn-191 and Asp-205. Substrate is bound by residues Asn-256 and 318–320; that span reads GIT.

The protein belongs to the succinate/malate CoA ligase beta subunit family. In terms of assembly, heterotetramer of two alpha and two beta subunits. The cofactor is Mg(2+).

The enzyme catalyses succinate + ATP + CoA = succinyl-CoA + ADP + phosphate. The catalysed reaction is GTP + succinate + CoA = succinyl-CoA + GDP + phosphate. Its pathway is carbohydrate metabolism; tricarboxylic acid cycle; succinate from succinyl-CoA (ligase route): step 1/1. Its function is as follows. Succinyl-CoA synthetase functions in the citric acid cycle (TCA), coupling the hydrolysis of succinyl-CoA to the synthesis of either ATP or GTP and thus represents the only step of substrate-level phosphorylation in the TCA. The beta subunit provides nucleotide specificity of the enzyme and binds the substrate succinate, while the binding sites for coenzyme A and phosphate are found in the alpha subunit. In Mycobacterium bovis (strain ATCC BAA-935 / AF2122/97), this protein is Succinate--CoA ligase [ADP-forming] subunit beta.